The primary structure comprises 417 residues: Voltage-gated ClC-type chloride channel ClcB (417 aa).

10 consecutive transmembrane segments (helical) span residues 5 to 25 (LLIATLIGILAALAVAAFRHA), 54 to 74 (LITPALGGLAAGLLLWGWQKM), 146 to 166 (LWIASGAAAGMAGAYHAPLAG), 168 to 188 (LFIAEILFGTLMLASLGPVVV), 222 to 242 (VMIVSTGLVAGLCGPLLMWLM), 258 to 278 (WQLALGGLIVGLLSLLTPTVW), 288 to 308 (FLLSPPLFSLIGGIFACKILA), 316 to 336 (GAPGGVFTPTLFVGLSIGMFL), 349 to 371 (EIAILLGLAGMATLLAATTHAPI), and 380 to 400 (MTGEYQLLPGLLIACVVASVL).

Belongs to the chloride channel (TC 2.A.49) family. ClcB subfamily.

Its subcellular location is the cell inner membrane. Probably acts as an electrical shunt for an outwardly-directed proton pump that is linked to amino acid decarboxylation, as part of the extreme acid resistance (XAR) response. This Salmonella dublin (strain CT_02021853) protein is Voltage-gated ClC-type chloride channel ClcB.